Reading from the N-terminus, the 586-residue chain is Glutamate--tRNA ligase (586 aa).

A disordered region spans residues 84-111; sequence LTDIESEDTTDTYDLPSLPGVSDDEPTQ. A compositionally biased stretch (acidic residues) spans 85 to 94; the sequence is TDIESEDTTD. The 'HIGH' region motif lies at 119-129; the sequence is PNPNGPWHIGH.

This sequence belongs to the class-I aminoacyl-tRNA synthetase family. Glutamate--tRNA ligase type 2 subfamily.

The protein resides in the cytoplasm. It carries out the reaction tRNA(Glu) + L-glutamate + ATP = L-glutamyl-tRNA(Glu) + AMP + diphosphate. Its function is as follows. Catalyzes the attachment of glutamate to tRNA(Glu) in a two-step reaction: glutamate is first activated by ATP to form Glu-AMP and then transferred to the acceptor end of tRNA(Glu). In Haloquadratum walsbyi (strain DSM 16790 / HBSQ001), this protein is Glutamate--tRNA ligase.